The following is a 169-amino-acid chain: S-ribosylhomocysteine lyase (169 aa).

Residues His-54, His-58, and Cys-128 each contribute to the Fe cation site.

The protein belongs to the LuxS family. As to quaternary structure, homodimer. Requires Fe cation as cofactor.

The catalysed reaction is S-(5-deoxy-D-ribos-5-yl)-L-homocysteine = (S)-4,5-dihydroxypentane-2,3-dione + L-homocysteine. Its function is as follows. Involved in the synthesis of autoinducer 2 (AI-2) which is secreted by bacteria and is used to communicate both the cell density and the metabolic potential of the environment. The regulation of gene expression in response to changes in cell density is called quorum sensing. Catalyzes the transformation of S-ribosylhomocysteine (RHC) to homocysteine (HC) and 4,5-dihydroxy-2,3-pentadione (DPD). In Shewanella pealeana (strain ATCC 700345 / ANG-SQ1), this protein is S-ribosylhomocysteine lyase.